The primary structure comprises 221 residues: 5'-nucleotidase (221 aa).

Asp-14 functions as the Nucleophile in the catalytic mechanism.

The protein belongs to the HAD-like hydrolase superfamily. Mn(2+) is required as a cofactor. It depends on Mg(2+) as a cofactor.

The catalysed reaction is a ribonucleoside 5'-phosphate + H2O = a ribonucleoside + phosphate. In terms of biological role, specifically dephosphorylates nucleoside 5'-monophosphates to nucleosides and inorganic phosphate. Displays high activity toward 5'-UMP and 5'-IMP, significant activity against 5'-XMP and 5'-TMP, and low activity against 5'-CMP. This Pseudomonas aeruginosa (strain ATCC 15692 / DSM 22644 / CIP 104116 / JCM 14847 / LMG 12228 / 1C / PRS 101 / PAO1) protein is 5'-nucleotidase.